A 312-amino-acid polypeptide reads, in one-letter code: Ribosomal RNA small subunit methyltransferase H (312 aa).

S-adenosyl-L-methionine is bound by residues 34-36 (AGH), Asp-54, Phe-81, Asp-102, and Gln-109.

This sequence belongs to the methyltransferase superfamily. RsmH family.

The protein resides in the cytoplasm. It carries out the reaction cytidine(1402) in 16S rRNA + S-adenosyl-L-methionine = N(4)-methylcytidine(1402) in 16S rRNA + S-adenosyl-L-homocysteine + H(+). Functionally, specifically methylates the N4 position of cytidine in position 1402 (C1402) of 16S rRNA. The chain is Ribosomal RNA small subunit methyltransferase H from Geobacter sp. (strain M21).